The following is a 432-amino-acid chain: Glutamyl-tRNA reductase (432 aa).

Residues threonine 49–arginine 52, serine 109, glutamate 114–glutamine 116, and glutamine 120 contribute to the substrate site. Cysteine 50 serves as the catalytic Nucleophile. Glycine 189–serine 194 contributes to the NADP(+) binding site.

This sequence belongs to the glutamyl-tRNA reductase family. As to quaternary structure, homodimer.

It catalyses the reaction (S)-4-amino-5-oxopentanoate + tRNA(Glu) + NADP(+) = L-glutamyl-tRNA(Glu) + NADPH + H(+). It participates in porphyrin-containing compound metabolism; protoporphyrin-IX biosynthesis; 5-aminolevulinate from L-glutamyl-tRNA(Glu): step 1/2. Its pathway is porphyrin-containing compound metabolism; chlorophyll biosynthesis. Catalyzes the NADPH-dependent reduction of glutamyl-tRNA(Glu) to glutamate 1-semialdehyde (GSA). This Cyanothece sp. (strain PCC 7425 / ATCC 29141) protein is Glutamyl-tRNA reductase.